A 326-amino-acid polypeptide reads, in one-letter code: Beta-ketoacyl-[acyl-carrier-protein] synthase III (326 aa).

Catalysis depends on residues C111 and H252. The ACP-binding stretch occupies residues 253–257; that stretch reads QANIR. The active site involves N282.

The protein belongs to the thiolase-like superfamily. FabH family. Homodimer.

It is found in the plastid. Its subcellular location is the chloroplast. It catalyses the reaction malonyl-[ACP] + acetyl-CoA + H(+) = 3-oxobutanoyl-[ACP] + CO2 + CoA. It functions in the pathway lipid metabolism; fatty acid biosynthesis. Its function is as follows. Catalyzes the condensation reaction of fatty acid synthesis by the addition to an acyl acceptor of two carbons from malonyl-ACP. Catalyzes the first condensation reaction which initiates fatty acid synthesis and may therefore play a role in governing the total rate of fatty acid production. Possesses both acetoacetyl-ACP synthase and acetyl transacylase activities. Its substrate specificity determines the biosynthesis of branched-chain and/or straight-chain of fatty acids. The protein is Beta-ketoacyl-[acyl-carrier-protein] synthase III of Porphyra purpurea (Red seaweed).